A 285-amino-acid chain; its full sequence is 33 kDa chaperonin (285 aa).

Cystine bridges form between cysteine 228–cysteine 230 and cysteine 261–cysteine 264.

Belongs to the HSP33 family. Under oxidizing conditions two disulfide bonds are formed involving the reactive cysteines. Under reducing conditions zinc is bound to the reactive cysteines and the protein is inactive.

The protein resides in the cytoplasm. Functionally, redox regulated molecular chaperone. Protects both thermally unfolding and oxidatively damaged proteins from irreversible aggregation. Plays an important role in the bacterial defense system toward oxidative stress. The polypeptide is 33 kDa chaperonin (Hahella chejuensis (strain KCTC 2396)).